The chain runs to 339 residues: Anthranilate phosphoribosyltransferase (339 aa).

5-phospho-alpha-D-ribose 1-diphosphate-binding positions include Gly-81, 84-85 (GD), Ser-89, 91-94 (NVSS), 109-117 (KHGNRALSS), and Ala-121. Gly-81 contributes to the anthranilate binding site. Residue Ser-93 participates in Mg(2+) binding. Position 112 (Asn-112) interacts with anthranilate. An anthranilate-binding site is contributed by Arg-167. Mg(2+)-binding residues include Asp-225 and Glu-226.

This sequence belongs to the anthranilate phosphoribosyltransferase family. As to quaternary structure, homodimer. Mg(2+) is required as a cofactor.

It catalyses the reaction N-(5-phospho-beta-D-ribosyl)anthranilate + diphosphate = 5-phospho-alpha-D-ribose 1-diphosphate + anthranilate. The protein operates within amino-acid biosynthesis; L-tryptophan biosynthesis; L-tryptophan from chorismate: step 2/5. Functionally, catalyzes the transfer of the phosphoribosyl group of 5-phosphorylribose-1-pyrophosphate (PRPP) to anthranilate to yield N-(5'-phosphoribosyl)-anthranilate (PRA). The sequence is that of Anthranilate phosphoribosyltransferase from Brucella canis (strain ATCC 23365 / NCTC 10854 / RM-666).